A 351-amino-acid chain; its full sequence is Protein RecA (351 aa).

68 to 75 (GPESSGKT) contributes to the ATP binding site.

Belongs to the RecA family.

The protein resides in the cytoplasm. Functionally, can catalyze the hydrolysis of ATP in the presence of single-stranded DNA, the ATP-dependent uptake of single-stranded DNA by duplex DNA, and the ATP-dependent hybridization of homologous single-stranded DNAs. It interacts with LexA causing its activation and leading to its autocatalytic cleavage. In Thermotoga neapolitana (strain ATCC 49049 / DSM 4359 / NBRC 107923 / NS-E), this protein is Protein RecA.